Consider the following 501-residue polypeptide: Sarpagan bridge enzyme (501 aa).

Residues 3 to 23 traverse the membrane as a helical; Signal-anchor for type II membrane protein segment; the sequence is VMQLSFSYPALFLFVFFLFML. Cys441 provides a ligand contact to heme.

It belongs to the cytochrome P450 family. Heme is required as a cofactor. As to expression, highly expressed in roots. Expressed at low levels in stems.

It is found in the endoplasmic reticulum membrane. It catalyses the reaction (19E)-geissoschizine + reduced [NADPH--hemoprotein reductase] + O2 = polyneuridine aldehyde + oxidized [NADPH--hemoprotein reductase] + 2 H2O + H(+). The enzyme catalyses tetrahydroalstonine + A + reduced [NADPH--hemoprotein reductase] + O2 = alstonine + AH2 + oxidized [NADPH--hemoprotein reductase] + 2 H2O + H(+). The catalysed reaction is ajmalicine + A + reduced [NADPH--hemoprotein reductase] + O2 = serpentine + AH2 + oxidized [NADPH--hemoprotein reductase] + 2 H2O + H(+). The protein operates within alkaloid biosynthesis; ajmaline biosynthesis. In terms of biological role, monooxygenase involved in the biosynthesis of ajmaline-type monoterpenoid indole alkaloids (MIAs) natural products, important plant-derived pharmaceuticals used in the therapy of heart disorders. Converts by cyclization the strictosidine-derived geissoschizine to the sarpagan alkaloid polyneuridine aldehyde, precursor of vomilenine, an intermediate chemical in the biosynthesis of ajmaline. Converts by aromatization the tetrahydro-beta-carboline alkaloids tetrahydroalstonine and ajmalicine to the corresponding beta-carboline alkaloids alstonine and serpentine, respectively. This is Sarpagan bridge enzyme from Gelsemium sempervirens (Carolina jasmine).